We begin with the raw amino-acid sequence, 506 residues long: D-alanine--D-alanyl carrier protein ligase (506 aa).

152–153 (TS) provides a ligand contact to ATP. Residue Asp197 participates in D-alanine binding. An ATP-binding site is contributed by 292-297 (NTYGPT). Val301 contacts D-alanine. ATP-binding positions include Asp383, 395–398 (YRGR), and Lys494. Residue Lys494 participates in D-alanine binding.

The protein belongs to the ATP-dependent AMP-binding enzyme family. DltA subfamily.

The protein localises to the cytoplasm. It catalyses the reaction holo-[D-alanyl-carrier protein] + D-alanine + ATP = D-alanyl-[D-alanyl-carrier protein] + AMP + diphosphate. Its pathway is cell wall biogenesis; lipoteichoic acid biosynthesis. Functionally, catalyzes the first step in the D-alanylation of lipoteichoic acid (LTA), the activation of D-alanine and its transfer onto the D-alanyl carrier protein (Dcp) DltC. In an ATP-dependent two-step reaction, forms a high energy D-alanyl-AMP intermediate, followed by transfer of the D-alanyl residue as a thiol ester to the phosphopantheinyl prosthetic group of the Dcp. D-alanylation of LTA plays an important role in modulating the properties of the cell wall in Gram-positive bacteria, influencing the net charge of the cell wall. This Lacticaseibacillus paracasei (strain ATCC 334 / BCRC 17002 / CCUG 31169 / CIP 107868 / KCTC 3260 / NRRL B-441) (Lactobacillus paracasei) protein is D-alanine--D-alanyl carrier protein ligase.